Here is a 144-residue protein sequence, read N- to C-terminus: Ig heavy chain V region M167 (144 aa).

Residues 1 to 19 (MKMWLNWVFLLTLLHGIQC) form the signal peptide. Residues 20 to 133 (EVKVVESGGG…GNSYFGYFDV (114 aa)) form the Ig-like domain.

This chain is Ig heavy chain V region M167, found in Mus musculus (Mouse).